Consider the following 312-residue polypeptide: Olfactory receptor 8K3 (312 aa).

Topologically, residues 1 to 25 (MEQHNLTTVNEFILTGITDIAELQA) are extracellular. Asn5 is a glycosylation site (N-linked (GlcNAc...) asparagine). Residues 26 to 46 (PLFALFLMIYVISVMGNLGMI) traverse the membrane as a helical segment. The Cytoplasmic segment spans residues 47 to 54 (VLTKLDSR). The helical transmembrane segment at 55 to 75 (LQTPMYFFLRHLAFMDLGYST) threads the bilayer. Residues 76–99 (TVGPKMLVNFVVDKNIISYYFCAT) are Extracellular-facing. A disulfide bond links Cys97 and Cys189. Residues 100–120 (QLAFFLVFIGSELFILSAMSY) form a helical membrane-spanning segment. At 121-139 (DLYVAICNPLLYTVIMSRR) the chain is on the cytoplasmic side. Residues 140-160 (VCQVLVAIPYLYCTFISLLVT) form a helical membrane-spanning segment. The Extracellular portion of the chain corresponds to 161-197 (IKIFTLSFCGYNVISHFYCDSLPLLPLLCSNTHEIEL). A helical transmembrane segment spans residues 198–217 (IILIFAAIDLISSLLIVLLS). Residues 218–236 (YLLILVAILRMNSAGRQKA) are Cytoplasmic-facing. The chain crosses the membrane as a helical span at residues 237 to 257 (FSTCGAHLTVVIVFYGTLLFM). The Extracellular portion of the chain corresponds to 258–270 (YVQPKSSHSFDTD). A helical transmembrane segment spans residues 271-291 (KVASIFYTLVIPMLNPLIYSL). At 292-312 (RNKDVKYALRRTWNNLCNIFV) the chain is on the cytoplasmic side.

This sequence belongs to the G-protein coupled receptor 1 family.

The protein resides in the cell membrane. Odorant receptor. This chain is Olfactory receptor 8K3 (OR8K3), found in Homo sapiens (Human).